The primary structure comprises 319 residues: Multivesicular body subunit 12B (319 aa).

The segment at 1–50 is disordered; sequence MRSCFCVRRSRDPPPPQPPPPPPQRGTDQSTMPEVKDLSEALPETSMDPI. The segment covering 13–24 has biased composition (pro residues); the sequence is PPPPQPPPPPPQ. Residues Ser46 and Ser101 each carry the phosphoserine modification. The 147-residue stretch at 47-193 folds into the MABP domain; sequence MDPITGVGVV…SMGIWYRMGR (147 aa). Phosphothreonine occurs at positions 122, 204, and 205. Positions 195–222 are disordered; that stretch reads PRNHDSSQPTTPSQSSAASTPAPNLPRH. The span at 200-216 shows a compositional bias: low complexity; that stretch reads SSQPTTPSQSSAASTPA. At Ser224 the chain carries Phosphoserine. Residues 254-303 enclose the UMA domain; that stretch reads MDGVPFMISEKFSCVPESMQPFDLLGITIKSLAEIEKEYEYSFRTEQSAA. Residues 299-319 form a disordered region; sequence EQSAAARLPPSPTRCQQIPQS. Ser309 carries the post-translational modification Phosphoserine.

This sequence belongs to the MVB12 family. As to quaternary structure, component of the ESCRT-I complex (endosomal sorting complex required for transport I) which consists of TSG101, VPS28, a VPS37 protein (VPS37A to -D) and MVB12A or MVB12B in a 1:1:1:1 stoichiometry. Interacts with TSG101; the association appears to be mediated by the TSG101-VPS37 binary subcomplex. Interacts with VPS28. Interacts with VPS37B; the association appears to be mediated by the TSG101-VPS37 binary subcomplex. Interacts with VPS37C; the association appears to be mediated by the TSG101-VPS37 binary subcomplex.

It is found in the endosome. The protein resides in the late endosome membrane. Component of the ESCRT-I complex, a regulator of vesicular trafficking process. Required for the sorting of endocytic ubiquitinated cargos into multivesicular bodies. This chain is Multivesicular body subunit 12B (MVB12B), found in Homo sapiens (Human).